Here is a 197-residue protein sequence, read N- to C-terminus: 7-methyl-GTP pyrophosphatase (197 aa).

Catalysis depends on aspartate 74, which acts as the Proton acceptor.

Belongs to the Maf family. YceF subfamily. Requires a divalent metal cation as cofactor.

It localises to the cytoplasm. It carries out the reaction N(7)-methyl-GTP + H2O = N(7)-methyl-GMP + diphosphate + H(+). Its function is as follows. Nucleoside triphosphate pyrophosphatase that hydrolyzes 7-methyl-GTP (m(7)GTP). May have a dual role in cell division arrest and in preventing the incorporation of modified nucleotides into cellular nucleic acids. The protein is 7-methyl-GTP pyrophosphatase of Saccharophagus degradans (strain 2-40 / ATCC 43961 / DSM 17024).